A 469-amino-acid polypeptide reads, in one-letter code: MERAMANVDLGPYRRIVQIFWDPEPTNDVVHDQPVWCLGRSYRLNGKKNIKADDHHPQTPPSVLKAETETQEAHDTAQPPNPPTNAPDTPPDSISSSFSSSLAYDDPVVDGGWPSGFISDFESKIWMTYRSEFEPIPRSTNPQATSALSLSMRLKSQLGDQSPFSSDSGWGCMIRSGQSMLANTIAMVRLGRGDWRRGESVEEECRLLKDFADDPRAPYSIHSFVRHGASACGKYPGEWFGPSATARCIQALTNSHESSIRVYSTGDGPDVYEDEFMQIAKPPGEDFHPTLVLVGTRLGIDKITPVYWEALIAALQMPQSESQGKYYQYITRTFSALTIRSGRPSSSHYFIGAQGSFLFYLDPHHTRVALPYHEDPIEYTSEEIASCHTPRLRRIHVREMDPSMLIGFLIQNEVDWQELKRNVKHVQGKSIIHITDRNAVLGGSSEGRESAIDEVETLSDDDTDTIHEA.

The tract at residues 48 to 99 (KNIKADDHHPQTPPSVLKAETETQEAHDTAQPPNPPTNAPDTPPDSISSSFS) is disordered. Residues 66-75 (AETETQEAHD) show a composition bias toward basic and acidic residues. A compositionally biased stretch (pro residues) spans 79-90 (PPNPPTNAPDTP). Catalysis depends on Cys-172, which acts as the Nucleophile. Residues Asp-362 and His-364 contribute to the active site. Positions 443–469 (GSSEGRESAIDEVETLSDDDTDTIHEA) are disordered. Acidic residues predominate over residues 452-463 (IDEVETLSDDDT).

It belongs to the peptidase C54 family. As to quaternary structure, interacts with ATG8.

It localises to the cytoplasm. The protein resides in the nucleus. Its subcellular location is the preautophagosomal structure. The catalysed reaction is [protein]-C-terminal L-amino acid-glycyl-phosphatidylethanolamide + H2O = [protein]-C-terminal L-amino acid-glycine + a 1,2-diacyl-sn-glycero-3-phosphoethanolamine. Cysteine protease that plays a key role in cytoplasm to vacuole transport (Cvt) and autophagy by mediating both proteolytic activation and delipidation of ATG8. Required for selective autophagic degradation of the nucleus (nucleophagy) as well as for mitophagy which contributes to regulate mitochondrial quantity and quality by eliminating the mitochondria to a basal level to fulfill cellular energy requirements and preventing excess ROS production. The protease activity is required for proteolytic activation of ATG8: cleaves the C-terminal amino acid of ATG8 to reveal a C-terminal glycine. ATG8 ubiquitin-like activity requires the exposure of the glycine at the C-terminus for its conjugation to phosphatidylethanolamine (PE) and its insertion to membranes, which is necessary for autophagy. The ATG8-PE conjugate mediates tethering between adjacent membranes and stimulates membrane hemifusion, leading to expansion of the autophagosomal membrane during autophagy. In addition to the protease activity, also catalyzes deconjugation of PE-conjugated forms of ATG8 during macroautophagy: ATG8 delipidation is required to release the protein from membranes, which facilitates multiple events during macroautophagy, and especially for efficient autophagosome biogenesis, the assembly of ATG9-containing tubulovesicular clusters into phagophores/autophagosomes, and for the disassembly of PAS-associated ATG components. ATG8 delipidation by ATG4 also recycles ATG8-PE generated on inappropriate membranes to maintain a reservoir of unlipidated ATG8 that is required for autophagosome formation at the PAS. Autophagy is required for proper vegetative growth, asexual/sexual reproduction, and full virulence. Autophagy is particularly involved in the biosynthesis of deoxynivalenol (DON), an important virulence determinant. This chain is Cysteine protease ATG4, found in Gibberella zeae (strain ATCC MYA-4620 / CBS 123657 / FGSC 9075 / NRRL 31084 / PH-1) (Wheat head blight fungus).